The chain runs to 541 residues: Chaperonin GroEL (541 aa).

Residues 29 to 32, 86 to 90, Gly413, 477 to 479, and Asp493 each bind ATP; these read TLGP, DGTTT, and DAL.

Belongs to the chaperonin (HSP60) family. In terms of assembly, forms a cylinder of 14 subunits composed of two heptameric rings stacked back-to-back. Interacts with the co-chaperonin GroES.

It localises to the cytoplasm. The catalysed reaction is ATP + H2O + a folded polypeptide = ADP + phosphate + an unfolded polypeptide.. Functionally, together with its co-chaperonin GroES, plays an essential role in assisting protein folding. The GroEL-GroES system forms a nano-cage that allows encapsulation of the non-native substrate proteins and provides a physical environment optimized to promote and accelerate protein folding. The chain is Chaperonin GroEL from Clostridium botulinum (strain Loch Maree / Type A3).